The chain runs to 480 residues: Cysteine--tRNA ligase (480 aa).

Cys29 lines the Zn(2+) pocket. Positions 31 to 41 (PTVYADPHLGH) match the 'HIGH' region motif. Zn(2+)-binding residues include Cys220, His245, and Glu249. Positions 276–280 (KMAKS) match the 'KMSKS' region motif. Position 279 (Lys279) interacts with ATP.

It belongs to the class-I aminoacyl-tRNA synthetase family. Monomer. Zn(2+) serves as cofactor.

Its subcellular location is the cytoplasm. The enzyme catalyses tRNA(Cys) + L-cysteine + ATP = L-cysteinyl-tRNA(Cys) + AMP + diphosphate. In Thermus thermophilus (strain ATCC 27634 / DSM 579 / HB8), this protein is Cysteine--tRNA ligase.